The chain runs to 126 residues: Fatty acid-binding protein, liver (126 aa).

At alanine 2 the chain carries N-acetylalanine.

It belongs to the calycin superfamily. Fatty-acid binding protein (FABP) family.

It is found in the cytoplasm. Binds free fatty acids and their coenzyme A derivatives, bilirubin, and some other small molecules in the cytoplasm. May be involved in intracellular lipid transport. The chain is Fatty acid-binding protein, liver (fabp1) from Schroederichthys bivius (Narrowmouthed catshark).